A 180-amino-acid polypeptide reads, in one-letter code: NADH-quinone oxidoreductase subunit I (180 aa).

2 consecutive 4Fe-4S ferredoxin-type domains span residues 50–80 and 90–119; these read LTRDPDGEERCVACNLCAVACPVGCISLQKA and EFFRINFSRCIFCGLCEEACPTTAIQLTPD. Residues Cys-60, Cys-63, Cys-66, Cys-70, Cys-99, Cys-102, Cys-105, and Cys-109 each coordinate [4Fe-4S] cluster.

The protein belongs to the complex I 23 kDa subunit family. As to quaternary structure, NDH-1 is composed of 13 different subunits. Subunits NuoA, H, J, K, L, M, N constitute the membrane sector of the complex. Requires [4Fe-4S] cluster as cofactor.

It is found in the cell inner membrane. It carries out the reaction a quinone + NADH + 5 H(+)(in) = a quinol + NAD(+) + 4 H(+)(out). NDH-1 shuttles electrons from NADH, via FMN and iron-sulfur (Fe-S) centers, to quinones in the respiratory chain. The immediate electron acceptor for the enzyme in this species is believed to be ubiquinone. Couples the redox reaction to proton translocation (for every two electrons transferred, four hydrogen ions are translocated across the cytoplasmic membrane), and thus conserves the redox energy in a proton gradient. This Salmonella choleraesuis (strain SC-B67) protein is NADH-quinone oxidoreductase subunit I.